Here is an 847-residue protein sequence, read N- to C-terminus: Beta-galactosidase 1 (847 aa).

The first 32 residues, 1-32 (MGSKPNAMKNVVAMAAVSALFLLGFLVCSVSG), serve as a signal peptide directing secretion. Glutamate 190 serves as the catalytic Proton donor. Catalysis depends on glutamate 259, which acts as the Nucleophile. Asparagine 469 carries N-linked (GlcNAc...) asparagine glycosylation. Residues 761–847 (KPLHPKAHLQ…KKLAVEAVCA (87 aa)) form the SUEL-type lectin domain.

It belongs to the glycosyl hydrolase 35 family. Ubiquitous, at low levels.

It is found in the secreted. Its subcellular location is the extracellular space. It localises to the apoplast. The catalysed reaction is Hydrolysis of terminal non-reducing beta-D-galactose residues in beta-D-galactosides.. The polypeptide is Beta-galactosidase 1 (BGAL1) (Arabidopsis thaliana (Mouse-ear cress)).